The chain runs to 342 residues: Outer membrane porin C (342 aa).

Belongs to the Gram-negative porin family. As to quaternary structure, homotrimer.

It localises to the cell outer membrane. In terms of biological role, forms pores that allow passive diffusion of small molecules across the outer membrane. In R.aquatilis OmpC is involved in the adhesion to wheat roots. The sequence is that of Outer membrane porin C (ompC) from Rahnella aquatilis.